Consider the following 301-residue polypeptide: UPF0282 protein Pcal_1546 (301 aa).

The protein belongs to the UPF0282 family.

In Pyrobaculum calidifontis (strain DSM 21063 / JCM 11548 / VA1), this protein is UPF0282 protein Pcal_1546.